The chain runs to 96 residues: Prokineticin Bm8-d (96 aa).

An N-terminal signal peptide occupies residues 1-19; that stretch reads MKCFAQIVVLLLVIAFSHG. Disulfide bonds link C26/C38, C32/C50, C37/C78, C60/C86, and C80/C95.

It belongs to the AVIT (prokineticin) family. In terms of tissue distribution, expressed by the skin glands.

It is found in the secreted. In terms of biological role, potent agonist for both PKR1/PROKR1 and PKR2/PROKR2, and inducer of a potent and long-lasting hyperalgesia. Also potentiates capsaicin-induced TRPV1 current, when tested on DRG neurons. At subnanomolar concentrations, this protein both induces potent chemotaxis of macrophages and stimulates LPS-induced production of the pro-inflammatory cytokines IL-1 and IL-12. In vivo, potently stimulates the contraction of the guinea-pig gastrointestinal (GI) smooth muscle (nanomolar concentration). This Bombina maxima (Giant fire-bellied toad) protein is Prokineticin Bm8-d.